The primary structure comprises 222 residues: MIF4G domain-containing protein (222 aa).

The MIF4G domain maps to 3 to 205 (EPSREEYKIQ…LEIIEFRAAG (203 aa)).

This sequence belongs to the MIF4GD family. In terms of assembly, interacts with EIF4G1, EIF4G2 and SLBP; probably tethered by SLBP to the 3'-end of mRNAs ending with the histone stem-loop, it also interacts with EIF4G1 which is bound to their 5'-end.

The protein resides in the cytoplasm. Its subcellular location is the nucleus. Functions in replication-dependent translation of histone mRNAs which differ from other eukaryotic mRNAs in that they do not end with a poly-A tail but a stem-loop. May participate in circularizing those mRNAs specifically enhancing their translation. This chain is MIF4G domain-containing protein (MIF4GD), found in Homo sapiens (Human).